A 100-amino-acid polypeptide reads, in one-letter code: Integration host factor subunit alpha (100 aa).

It belongs to the bacterial histone-like protein family. In terms of assembly, heterodimer of an alpha and a beta chain.

Its function is as follows. This protein is one of the two subunits of integration host factor, a specific DNA-binding protein that functions in genetic recombination as well as in transcriptional and translational control. The chain is Integration host factor subunit alpha from Cereibacter sphaeroides (strain ATCC 17023 / DSM 158 / JCM 6121 / CCUG 31486 / LMG 2827 / NBRC 12203 / NCIMB 8253 / ATH 2.4.1.) (Rhodobacter sphaeroides).